A 78-amino-acid polypeptide reads, in one-letter code: Conotoxin TsMSGL-13 (78 aa).

Residues 1–24 (MSGLGIMVLTLLLFMFMATSHQDA) form the signal peptide. The propeptide occupies 25–44 (GEKQATQRDAINVRRRRSIT). 3 cysteine pairs are disulfide-bonded: C51-C63, C55-C72, and C62-C76. F77 is subject to Phenylalanine amide.

Belongs to the conotoxin O3 superfamily. Expressed by the venom duct.

Its subcellular location is the secreted. The sequence is that of Conotoxin TsMSGL-13 from Conus tessulatus (Tessellate cone).